Reading from the N-terminus, the 123-residue chain is Small ribosomal subunit protein uS11 (123 aa).

The protein belongs to the universal ribosomal protein uS11 family. As to quaternary structure, part of the 30S ribosomal subunit. Interacts with proteins S7 and S18. Binds to IF-3.

In terms of biological role, located on the platform of the 30S subunit, it bridges several disparate RNA helices of the 16S rRNA. Forms part of the Shine-Dalgarno cleft in the 70S ribosome. The sequence is that of Small ribosomal subunit protein uS11 from Coxiella burnetii (strain RSA 331 / Henzerling II).